We begin with the raw amino-acid sequence, 234 residues long: Thymidine kinase, cytosolic (234 aa).

Ser2 is modified (N-acetylserine). 2 positions are modified to phosphoserine: Ser2 and Ser13. Residues 26 to 33 (GPMFSGKS), 58 to 60 (DTR), and 97 to 100 (DEGQ) each bind ATP. Glu98 serves as the catalytic Proton acceptor. Residue Phe128 participates in substrate binding. 2 residues coordinate Zn(2+): Cys153 and Cys156. Substrate is bound by residues 172–176 (VEVIG) and Tyr181. Positions 185 and 188 each coordinate Zn(2+). The short motif at 203–205 (KEN) is the KEN box element. Ser231 is subject to Phosphoserine.

It belongs to the thymidine kinase family. In terms of assembly, homotetramer. Tetramerization from dimerization is induced by ATP and increases catalytic efficiency due to a high affinity for thymidine. Tetramerization is inhibited by phosphorylation at Ser-13. Interacts (via the KEN box) with FZR1. In terms of processing, phosphorylated on Ser-13 in mitosis. Phosphorylation of Ser-13 by CDK1 during mitosis reduces homotetramerization and catalytic efficiency when DNA replication is complete and intracellular TK1 is still present at a high level. Post-translationally, polyubiquitinated. Postmitosis, ubiquitination leads to proteasomal degradation. The KEN box sequence located at the C-terminal region targets for degradation by the anaphase promoting complex (APC/C) activated and rate-limited by FZR1.

The protein resides in the cytoplasm. The enzyme catalyses thymidine + ATP = dTMP + ADP + H(+). Its function is as follows. Cell-cycle-regulated enzyme of importance in nucleotide metabolism. Catalyzes the first enzymatic step in the salvage pathway converting thymidine into thymidine monophosphate. Transcriptional regulation limits expression to the S phase of the cell cycle and transient expression coincides with the oscillation in the intracellular dTTP concentration. Also important for the activation of anticancer and antiviral nucleoside analog prodrugs such as 1-b-d-arabinofuranosylcytosine (AraC) and 3c-azido-3c-deoxythymidine (AZT). The polypeptide is Thymidine kinase, cytosolic (Homo sapiens (Human)).